The primary structure comprises 117 residues: Eukaryotic translation initiation factor 4E-binding protein 1 (117 aa).

Composition is skewed to polar residues over residues 1-12 and 33-47; these read MSAGSSCSQTPS and YSTTPGGTLFSTTPG. The tract at residues 1 to 47 is disordered; the sequence is MSAGSSCSQTPSRAIPTRRVALGDGVQLPPGDYSTTPGGTLFSTTPG. N-acetylserine is present on Ser-2. Thr-36 and Thr-40 each carry phosphothreonine. Ser-43 carries the post-translational modification Phosphoserine. A phosphothreonine mark is found at Thr-45 and Thr-49. The residue at position 53 (Tyr-53) is a Phosphotyrosine. The YXXXXLphi motif motif lies at 53–59; sequence YDRKFLM. Lys-56 is covalently cross-linked (Glycyl lysine isopeptide (Lys-Gly) (interchain with G-Cter in ubiquitin)). Phosphoserine is present on Ser-64. The disordered stretch occupies residues 64-117; it reads SPVAKTPPKDLPAIPGVTSPTSDEPPMQASQSQLPSSPEDKRAGGEESQFEMDI. A Phosphothreonine modification is found at Thr-69. Positions 81 to 99 are enriched in polar residues; the sequence is TSPTSDEPPMQASQSQLPS. Phosphoserine occurs at positions 82, 95, 99, 100, and 111. A TOS motif motif is present at residues 113-117; sequence FEMDI.

It belongs to the eIF4E-binding protein family. As to quaternary structure, hypophosphorylated EIF4EBP1 competes with EIF4G1/EIF4G3 to interact with EIF4E; insulin stimulated MAP-kinase (MAPK1 and MAPK3) or mTORC1 phosphorylation of EIF4EBP1 causes dissociation of the complex allowing EIF4G1/EIF4G3 to bind and consequent initiation of translation. Interacts (via TOS motif) with RPTOR; promoting phosphorylation by mTORC1. Post-translationally, phosphorylated on serine and threonine residues in response to insulin, EGF and PDGF. Phosphorylation at Thr-36, Thr-45, Ser-64 and Thr-69, corresponding to the hyperphosphorylated form, is regulated by mTORC1 and abolishes binding to EIF4E. Ubiquitinated: when eIF4E levels are low, hypophosphorylated form is ubiquitinated by the BCR(KLHL25) complex, leading to its degradation and serving as a homeostatic mechanism to maintain translation and prevent eIF4E inhibition when eIF4E levels are low. Not ubiquitinated when hyperphosphorylated (at Thr-36, Thr-45, Ser-64 and Thr-69) or associated with eIF4E. Highest expression in fat cells.

The protein resides in the cytoplasm. It is found in the nucleus. Functionally, repressor of translation initiation that regulates EIF4E activity by preventing its assembly into the eIF4F complex: hypophosphorylated form competes with EIF4G1/EIF4G3 and strongly binds to EIF4E, leading to repress translation. In contrast, hyperphosphorylated form dissociates from EIF4E, allowing interaction between EIF4G1/EIF4G3 and EIF4E, leading to initiation of translation. Mediates the regulation of protein translation by hormones, growth factors and other stimuli that signal through the MAP kinase and mTORC1 pathways. This Mus musculus (Mouse) protein is Eukaryotic translation initiation factor 4E-binding protein 1 (Eif4ebp1).